A 747-amino-acid polypeptide reads, in one-letter code: H(+)/Cl(-) exchange transporter 4 (747 aa).

Positions 1–50 (MDFLDEPFPDVGTYEDFHTIDWLREKSRDTDRHRKITSKSKESIWEFIKS) are required for localization in the endoplasmic reticulum. Over 1 to 54 (MDFLDEPFPDVGTYEDFHTIDWLREKSRDTDRHRKITSKSKESIWEFIKSLLDA) the chain is Cytoplasmic. 2 helical membrane passes run 55-92 (WSGWVVMLLIGLLAGTLAGVIDLAVDWMTDLKEGVCLS) and 138-161 (LNYLMYILWALLFAFLAVSLVRVF). A Selectivity filter part_1 motif is present at residues 167 to 171 (GSGIP). Residue Ser168 participates in chloride binding. The helical intramembrane region spans 170–177 (IPEIKTIL). Helical transmembrane passes span 187–205 (GKWTLLIKTVTLVLVVSSG) and 211–230 (EGPLVHVACCCGNFFSSLFS). Positions 209–213 (GKEGP) match the Selectivity filter part_2 motif. 2 intramembrane regions (helical) span residues 242-254 (VLSAAAAAGVSVA) and 258-266 (PIGGVLFSL). The next 5 helical transmembrane spans lie at 278–296 (LWRSFFAALVAAFTLRSIN), 320–345 (FPFILLGVFGGLWGTVFTRCNIAWCR), 352–372 (LGKYPVLEVIVVTAITAIIAY), 429–449 (MWQLALALIFKIVITIFTFGM), and 454–473 (GLFIPSMAVGAMAGRMVGIG). Positions 454–458 (GLFIP) match the Selectivity filter part_3 motif. Phe456 is a binding site for chloride. Intramembrane regions (helical) lie at residues 501–515 (GLYAMVGAAACLGGV) and 519–530 (TVSLVVIMFELT). An intramembrane region (note=Loop between two helices) is located at residues 531–534 (GGLE). A helical transmembrane segment spans residues 535–553 (YIVPLMAAAVTSKWVADAF). Residues 554–747 (GKEGIYEAHI…NQDPESIIFN (194 aa)) lie on the Cytoplasmic side of the membrane. Tyr559 is a chloride binding site. The region spanning 587–653 (MRPRRGEPPL…AIKNARQRQE (67 aa)) is the CBS 1 domain. ATP contacts are provided by residues Ser597 and 618-620 (YNG). Residues 654-683 (GIVSNSIMYFTEEPPELPANSPHPLKLRRI) form a required for localization in the endoplasmic reticulum region. The region spanning 684 to 742 (LNLSPFTVTDHTPMETVVDIFRKLGLRQCLVTRSGRLLGIITKKDVLRHMAQMANQDPE) is the CBS 2 domain. 725 to 728 (TKKD) provides a ligand contact to ATP.

Belongs to the chloride channel (TC 2.A.49) family. ClC-4/CLCN4 subfamily. In terms of tissue distribution, strongly expressed in liver and brain, but also in heart, muscle, kidney and spleen.

It is found in the early endosome membrane. The protein localises to the late endosome membrane. It localises to the endoplasmic reticulum membrane. Its subcellular location is the lysosome membrane. The protein resides in the recycling endosome membrane. Functionally, strongly outwardly rectifying, electrogenic H(+)/Cl(-)exchanger which mediates the exchange of chloride ions against protons. The CLC channel family contains both chloride channels and proton-coupled anion transporters that exchange chloride or another anion for protons. The presence of conserved gating glutamate residues is typical for family members that function as antiporters. The sequence is that of H(+)/Cl(-) exchange transporter 4 (Clcn4) from Rattus norvegicus (Rat).